The following is a 145-amino-acid chain: D-aminoacyl-tRNA deacylase (145 aa).

A Gly-cisPro motif, important for rejection of L-amino acids motif is present at residues 137–138 (GP).

Belongs to the DTD family. In terms of assembly, homodimer.

Its subcellular location is the cytoplasm. It carries out the reaction glycyl-tRNA(Ala) + H2O = tRNA(Ala) + glycine + H(+). It catalyses the reaction a D-aminoacyl-tRNA + H2O = a tRNA + a D-alpha-amino acid + H(+). An aminoacyl-tRNA editing enzyme that deacylates mischarged D-aminoacyl-tRNAs. Also deacylates mischarged glycyl-tRNA(Ala), protecting cells against glycine mischarging by AlaRS. Acts via tRNA-based rather than protein-based catalysis; rejects L-amino acids rather than detecting D-amino acids in the active site. By recycling D-aminoacyl-tRNA to D-amino acids and free tRNA molecules, this enzyme counteracts the toxicity associated with the formation of D-aminoacyl-tRNA entities in vivo and helps enforce protein L-homochirality. This Pseudomonas putida (strain ATCC 47054 / DSM 6125 / CFBP 8728 / NCIMB 11950 / KT2440) protein is D-aminoacyl-tRNA deacylase.